The chain runs to 446 residues: Immunoglobulin heavy constant gamma 3 (446 aa).

A CH1 region spans residues 1 to 98 (ASTKGPSVFP…PSNTKVDKRV (98 aa)). Residues 1 to 397 (ASTKGPSVFP…DGELDGLWTT (397 aa)) are Extracellular-facing. The region spanning 6 to 99 (PSVFPLAPCS…SNTKVDKRVE (94 aa)) is the Ig-like 1 domain. The cysteines at positions 27 and 83 are disulfide-linked. A hinge region spans residues 99–160 (ELKTPLGDTT…DTPPPCPRCP (62 aa)). 3 consecutive repeats follow at residues 116 to 130 (EPKS…PRCP), 131 to 145 (EPKS…PRCP), and 146 to 160 (EPKS…PRCP). Residues Thr122, Thr137, and Thr152 are each glycosylated (O-linked (GalNAc...) threonine). Positions 161–270 (APELLGGPSV…PIEKTISKTK (110 aa)) are CH2. Ig-like domains follow at residues 168-267 (PSVF…KTIS) and 276-372 (PQVY…KSLS). Cystine bridges form between Cys191–Cys251 and Cys297–Cys355. Residues Asn227 and Asn322 are each glycosylated (N-linked (GlcNAc...) asparagine). The interval 271–376 (GQPREPQVYT…TQKSLSLSPE (106 aa)) is CH3. A helical membrane pass occupies residues 398–418 (ITIFITLFLLSVCYSATVTFF). Residues 419–446 (KVKWIFSSVVDLKQTIIPDYRNMIGQGA) lie on the Cytoplasmic side of the membrane.

As to quaternary structure, immunoglobulins are composed of two identical heavy chains and two identical light chains; disulfide-linked. Post-translationally, N-linked glycans at Asn-322 are noncore fucosylated and the vast majority are diantennary species with a bisecting GlcNAc. Among them the most dominant glycans are HexNAc5Hex4, HexNAc5Hex5, and HexNAc5Hex5Sia1. N-linked glycans at Asn-227 are diantennary core fucosylated structures without bisecting GlcNAc (HexNAc4Hex4Fuc1, HexNAc4Hex5Fuc1, and HexNAc4Hex5Fuc1Sia1). Glycosylation on Asn-227 is required for interaction with Fc receptors and ability to activate the complement pathway. In terms of processing, (Microbial infection) Deglycosylation on Asn-227 by S.pyogenes EndoS or Endos2 endoglucosidases prevents interaction between immunoglobulin-gamma (IgG) and Fc receptors, impairing ability to activate the complement pathway. Post-translationally, O-linked glycans are non-, mono- and disialylated core 1-type O-glycans.

The protein resides in the secreted. It localises to the cell membrane. Constant region of immunoglobulin heavy chains. Immunoglobulins, also known as antibodies, are membrane-bound or secreted glycoproteins produced by B lymphocytes. In the recognition phase of humoral immunity, the membrane-bound immunoglobulins serve as receptors which, upon binding of a specific antigen, trigger the clonal expansion and differentiation of B lymphocytes into immunoglobulins-secreting plasma cells. Secreted immunoglobulins mediate the effector phase of humoral immunity, which results in the elimination of bound antigens. The antigen binding site is formed by the variable domain of one heavy chain, together with that of its associated light chain. Thus, each immunoglobulin has two antigen binding sites with remarkable affinity for a particular antigen. The variable domains are assembled by a process called V-(D)-J rearrangement and can then be subjected to somatic hypermutations which, after exposure to antigen and selection, allow affinity maturation for a particular antigen. The polypeptide is Immunoglobulin heavy constant gamma 3 (Homo sapiens (Human)).